Reading from the N-terminus, the 176-residue chain is Prion-like protein doppel (176 aa).

Residues 1–25 (MRKHLSWWWLATVCMLLFSHLSAVQ) form the signal peptide. The interval 27-50 (RGIKHRIKWNRKALPSTAQITEAQ) is flexible tail. Thr43 carries an O-linked (GalNAc...) threonine glycan. Residues 51–152 (VAENRPGAFI…KHCEFWLERG (102 aa)) form a globular region. Intrachain disulfides connect Cys94–Cys145 and Cys108–Cys140. Asn98 and Asn110 each carry an N-linked (GlcNAc...) asparagine glycan. Residues 122–139 (KPDNKLHQQVLWRLVQEL) form a cu(2+) binding region. Gly152 carries the GPI-anchor amidated glycine lipid modification. Residues 153-176 (AGLRVTMHQPVLLCLLALIWLTVK) constitute a propeptide, removed in mature form.

The protein belongs to the prion family. Post-translationally, N-glycosylated. N-glycosylated at two distinct sites. O-glycosylated. As to expression, expressed in testis, in Sertoli cells, ejaculated spermatozoa and in seminal fluid (at protein level).

Its subcellular location is the cell membrane. Required for normal acrosome reaction and for normal male fertility. Can bind Cu(2+). This Homo sapiens (Human) protein is Prion-like protein doppel (PRND).